A 725-amino-acid chain; its full sequence is Ribosomal RNA large subunit methyltransferase K/L (725 aa).

Positions 46-157 constitute a THUMP domain; it reads VAYRLCLWSR…RGQATLSLDL (112 aa).

The protein belongs to the methyltransferase superfamily. RlmKL family.

Its subcellular location is the cytoplasm. The catalysed reaction is guanosine(2445) in 23S rRNA + S-adenosyl-L-methionine = N(2)-methylguanosine(2445) in 23S rRNA + S-adenosyl-L-homocysteine + H(+). The enzyme catalyses guanosine(2069) in 23S rRNA + S-adenosyl-L-methionine = N(2)-methylguanosine(2069) in 23S rRNA + S-adenosyl-L-homocysteine + H(+). Functionally, specifically methylates the guanine in position 2445 (m2G2445) and the guanine in position 2069 (m7G2069) of 23S rRNA. The chain is Ribosomal RNA large subunit methyltransferase K/L from Pseudomonas aeruginosa (strain ATCC 15692 / DSM 22644 / CIP 104116 / JCM 14847 / LMG 12228 / 1C / PRS 101 / PAO1).